A 413-amino-acid chain; its full sequence is DnaJ protein homolog xdj1 (413 aa).

Positions 6 to 73 constitute a J domain; that stretch reads KLYDILEVHF…ESREMYDMYG (68 aa). The CR-type zinc finger occupies 134 to 219; the sequence is GKEVKLRATR…CKGSGTVPEQ (86 aa). 4 CXXCXGXG motif repeats span residues 147–154, 164–171, 191–198, and 207–214; these read CPRCQGRG, CLSCDGKG, CDTCNGKG, and CKHCKGSG. At Cys-410 the chain carries Cysteine methyl ester. Cys-410 is lipidated: S-farnesyl cysteine. Residues 411 to 413 constitute a propeptide, removed in mature form; that stretch reads QAQ.

It localises to the endoplasmic reticulum membrane. This Schizosaccharomyces pombe (strain 972 / ATCC 24843) (Fission yeast) protein is DnaJ protein homolog xdj1 (xdj1).